The following is a 76-amino-acid chain: Protein OPG128 (76 aa).

The cysteines at positions 17 and 21 are disulfide-linked.

It belongs to the orthopoxvirus OPG128 family. In terms of assembly, interacts with sulfhydryl oxidase OPG072; this interaction involves formation of a transient disulfide-bonded intermediate, allowing disulfide bond transfer. Interacts with OPG088; this interaction involves formation of a transient disulfide-bonded intermediate, allowing disulfide bond transfer.

Functionally, late protein which probably participates in disulfide bond formation by functioning as a thiol-disulfide transfer protein between membrane-associated OPG072 and OPG08. The complete pathway for formation of disulfide bonds in intracellular virion membrane proteins sequentially involves oxidation of OPG072, OPG128 and OPG08. In Homo sapiens (Human), this protein is Protein OPG128 (OPG128).